Reading from the N-terminus, the 269-residue chain is NAD kinase (269 aa).

Asp-45 (proton acceptor) is an active-site residue. NAD(+) is bound by residues 45 to 46 (DG), 122 to 123 (NE), Arg-149, Asp-151, and Ala-186.

Belongs to the NAD kinase family. It depends on a divalent metal cation as a cofactor.

It localises to the cytoplasm. It carries out the reaction NAD(+) + ATP = ADP + NADP(+) + H(+). Its function is as follows. Involved in the regulation of the intracellular balance of NAD and NADP, and is a key enzyme in the biosynthesis of NADP. Catalyzes specifically the phosphorylation on 2'-hydroxyl of the adenosine moiety of NAD to yield NADP. In Staphylococcus saprophyticus subsp. saprophyticus (strain ATCC 15305 / DSM 20229 / NCIMB 8711 / NCTC 7292 / S-41), this protein is NAD kinase.